Here is a 219-residue protein sequence, read N- to C-terminus: 2-hydroxy-3-keto-5-methylthiopentenyl-1-phosphate phosphatase (219 aa).

It belongs to the HAD-like hydrolase superfamily. MtnX family.

It catalyses the reaction 2-hydroxy-5-methylsulfanyl-3-oxopent-1-enyl phosphate + H2O = 1,2-dihydroxy-5-(methylsulfanyl)pent-1-en-3-one + phosphate. The protein operates within amino-acid biosynthesis; L-methionine biosynthesis via salvage pathway; L-methionine from S-methyl-5-thio-alpha-D-ribose 1-phosphate: step 4/6. Dephosphorylates 2-hydroxy-3-keto-5-methylthiopentenyl-1-phosphate (HK-MTPenyl-1-P) yielding 1,2-dihydroxy-3-keto-5-methylthiopentene (DHK-MTPene). This is 2-hydroxy-3-keto-5-methylthiopentenyl-1-phosphate phosphatase from Bacillus thuringiensis subsp. konkukian (strain 97-27).